The sequence spans 496 residues: MDFSPPHGLRGGRSPSLQDTTISSSHTQKNGGDSTPLPPINERLAFLRPSRELLEYYRKKIAEFDEEHEDLVKRLEQYKATYEEQHKLQWEMRQREEEIAELQKALSDMQVYLFQEREHVLRLYSENDRLKIRELEDRKKIQKLLALVGTSEGDITYFHKEPPSKVTIPQRTVQSGDPFDRKVQRSGRAGVKQVPLKAPGKQDRTKAAEKEDPQILLLQVEALQAQLEEQTRLSKEQIETLLEDRKVRMEEAQVQHQRDQDKMKAMTDKLNKTQKLLYESTRDFLQLKFECRANEKSWMAEKDRLLRELDRCREQLAFSIDPEQEREHEREHEREILRLSLAEKATRSSHSEEVKSLTEQLAQAHRLSEMYREQCVTLEDELGRIREEGDVGREIFKERSDKVAKRLQLMTQRYEALEKRRNMEVEGYKTDIKLLRQRLKDVEKQLFKVTLNIGPDQDLAILDAVRQGNKKTQKIQGELRNLKAKIYGLENELRIG.

The tract at residues Met1 to Glu42 is disordered. Residues Pro15–Asp33 are compositionally biased toward polar residues. Residues Arg51–Leu113 adopt a coiled-coil conformation. The interval Gln170–Ala208 is disordered. Positions Gln214 to Ile495 form a coiled coil.

In Xenopus laevis (African clawed frog), this protein is Coiled-coil domain-containing protein 77 (ccdc77).